We begin with the raw amino-acid sequence, 367 residues long: Holliday junction branch migration complex subunit RuvB (367 aa).

The interval 2–196 (TDEPLTDRPP…FGFTARLDFY (195 aa)) is large ATPase domain (RuvB-L). ATP-binding positions include Leu35, Arg36, Gly77, Lys80, Thr81, Thr82, 143 to 145 (EDF), Arg186, Tyr196, and Arg233. Thr81 lines the Mg(2+) pocket. The interval 197–267 (EPADLERIVH…VAQAALAVYE (71 aa)) is small ATPAse domain (RuvB-S). Residues 270–367 (EHGLDRLDRA…IDRDAGEPTA (98 aa)) form a head domain (RuvB-H) region. Residues Arg325 and Arg330 each contribute to the DNA site.

The protein belongs to the RuvB family. In terms of assembly, homohexamer. Forms an RuvA(8)-RuvB(12)-Holliday junction (HJ) complex. HJ DNA is sandwiched between 2 RuvA tetramers; dsDNA enters through RuvA and exits via RuvB. An RuvB hexamer assembles on each DNA strand where it exits the tetramer. Each RuvB hexamer is contacted by two RuvA subunits (via domain III) on 2 adjacent RuvB subunits; this complex drives branch migration. In the full resolvosome a probable DNA-RuvA(4)-RuvB(12)-RuvC(2) complex forms which resolves the HJ.

Its subcellular location is the cytoplasm. It carries out the reaction ATP + H2O = ADP + phosphate + H(+). The RuvA-RuvB-RuvC complex processes Holliday junction (HJ) DNA during genetic recombination and DNA repair, while the RuvA-RuvB complex plays an important role in the rescue of blocked DNA replication forks via replication fork reversal (RFR). RuvA specifically binds to HJ cruciform DNA, conferring on it an open structure. The RuvB hexamer acts as an ATP-dependent pump, pulling dsDNA into and through the RuvAB complex. RuvB forms 2 homohexamers on either side of HJ DNA bound by 1 or 2 RuvA tetramers; 4 subunits per hexamer contact DNA at a time. Coordinated motions by a converter formed by DNA-disengaged RuvB subunits stimulates ATP hydrolysis and nucleotide exchange. Immobilization of the converter enables RuvB to convert the ATP-contained energy into a lever motion, pulling 2 nucleotides of DNA out of the RuvA tetramer per ATP hydrolyzed, thus driving DNA branch migration. The RuvB motors rotate together with the DNA substrate, which together with the progressing nucleotide cycle form the mechanistic basis for DNA recombination by continuous HJ branch migration. Branch migration allows RuvC to scan DNA until it finds its consensus sequence, where it cleaves and resolves cruciform DNA. The polypeptide is Holliday junction branch migration complex subunit RuvB (Acidothermus cellulolyticus (strain ATCC 43068 / DSM 8971 / 11B)).